Here is a 123-residue protein sequence, read N- to C-terminus: UPF0102 protein SPO0400 (123 aa).

It belongs to the UPF0102 family.

The protein is UPF0102 protein SPO0400 of Ruegeria pomeroyi (strain ATCC 700808 / DSM 15171 / DSS-3) (Silicibacter pomeroyi).